The primary structure comprises 445 residues: MTELRQRVAHEPVAPPEDKESESEAKVDGETASDSESRAESAPLPVSADDTPEVLNRALSNLSSRWKNWWVRGILTLAMIAFFFIIIYLGPMVLMIIVMCVQIKCFHEIITIGYNVYHSYDLPWFRTLSWYFLLCVNYFFYGETVTDYFFTLVQREEPLRILSKYHRFISFTLYLIGFCMFVLSLVKKHYRLQFYMFGWTHVTLLIVVTQSHLVIHNLFEGMIWFIVPISCVICNDIMAYMFGFFFGRTPLIKLSPKKTWEGFIGGFFATVVFGLLLSYVMSGYRCFVCPVEYNNDTNSFTVDCEPSDLFRLQEYNIPGVIQSVIGWKTVRMYPFQIHSIALSTFASLIGPFGGFFASGFKRAFKIKDFANTIPGHGGIMDRFDCQYLMATFVNVYIASFIRGPNPSKLIQQFLTLRPDQQLHIFNTLRSHLIDKGMLTSTTEDE.

Residues 1–39 are compositionally biased toward basic and acidic residues; that stretch reads MTELRQRVAHEPVAPPEDKESESEAKVDGETASDSESRA. A disordered region spans residues 1 to 49; that stretch reads MTELRQRVAHEPVAPPEDKESESEAKVDGETASDSESRAESAPLPVSAD. Position 21 is a phosphoserine (S21). Residue T31 is modified to Phosphothreonine. A phosphoserine mark is found at S33, S35, and S37. The residue at position 51 (T51) is a Phosphothreonine. Transmembrane regions (helical) follow at residues 79 to 99, 132 to 152, 166 to 186, 213 to 233, 262 to 282, and 340 to 360; these read MIAF…IIVM, FLLC…FFTL, HRFI…LSLV, LVIH…SCVI, GFIG…YVMS, and IALS…ASGF.

This sequence belongs to the CDS family. Homodimer. As to expression, widely expressed. Expressed in heart, brain and retina, and to a lesser extent in placenta, lung, liver, skeletal muscle, kidney and pancreas.

The protein localises to the endoplasmic reticulum membrane. The catalysed reaction is a 1,2-diacyl-sn-glycero-3-phosphate + CTP + H(+) = a CDP-1,2-diacyl-sn-glycerol + diphosphate. It catalyses the reaction 1-octadecanoyl-2-(5Z,8Z,11Z,14Z-eicosatetraenoyl)-sn-glycero-3-phosphate + CTP + H(+) = 1-octadecanoyl-2-(5Z,8Z,11Z,14Z-eicosatetraenoyl)-sn-glycero-3-cytidine-5'-diphosphate + diphosphate. The enzyme catalyses 1-octadecanoyl-2-(9Z,12Z-octadecadienoyl)-sn-glycero-3-phosphate + CTP + H(+) = 1-octadecanoyl-2-(9Z,12Z-octadecadienoyl)-sn-glycero-3-cytidine-5'-diphosphate + diphosphate. It carries out the reaction 1-hexadecanoyl-2-(5Z,8Z,11Z,14Z-eicosatetraenoyl)-sn-glycero-3-phosphate + CTP + H(+) = 1-hexadecanoyl-2-(5Z,8Z,11Z,14Z-eicosatetraenoyl)-sn-glycero-3-cytidine-5'-diphosphate + diphosphate. The catalysed reaction is 1,2-di-(5Z,8Z,11Z,14Z)-eicosatetraenoyl-sn-glycero-3-phosphate + CTP + H(+) = 1,2-di-(5Z,8Z,11Z,14Z-eicosatetraenoyl)-sn-glycero-3-cytidine-5'-diphosphate + diphosphate. It catalyses the reaction 1-octadecanoyl-2-(9Z-octadecenoyl)-sn-glycero-3-phosphate + CTP + H(+) = 1-octadecanoyl-2-(9Z-octadecenoyl)-sn-glycero-3-cytidine-5'-diphosphate + diphosphate. The enzyme catalyses 1-octadecanoyl-2-(4Z,7Z,10Z,13Z,16Z,19Z-docosahexaenoyl)-sn-glycero-3-phosphate + CTP + H(+) = 1-octadecanoyl-2-(4Z,7Z,10Z,13Z,16Z,19Z-docosahexaenoyl)-sn-glycero-3-cytidine-5'-diphosphate + diphosphate. It carries out the reaction 1,2-di-(9Z,12Z-octadecadienoyl)-sn-glycero-3-phosphate + CTP + H(+) = 1,2-di-(9Z,12Z-octadecadienoyl)-sn-glycero-3-cytidine-5'-diphosphate + diphosphate. The catalysed reaction is 1,2-di-(9Z-octadecenoyl)-sn-glycero-3-phosphate + CTP + H(+) = 1,2-di-(9Z-octadecenoyl)-sn-glycero-3-cytidine-5'-diphosphate + diphosphate. It participates in phospholipid metabolism; CDP-diacylglycerol biosynthesis; CDP-diacylglycerol from sn-glycerol 3-phosphate: step 3/3. Its activity is regulated as follows. Inhibited by its anionic phospholipid end products, with phosphatidylinositol-(4,5)- bisphosphate (PIP2) showing the strongest inhibition. Inhibition is also acyl chain specific, with 1-stearoyl-2-arachidonoyl-snphosphatidylinositol showing the strongest inhibition. In terms of biological role, catalyzes the conversion of phosphatidic acid (PA) to CDP-diacylglycerol (CDP-DAG), an essential intermediate in the synthesis of phosphatidylglycerol, cardiolipin and phosphatidylinositol. Exhibits specificity for the nature of the acyl chains at the sn-1 and sn-2 positions in the substrate, PA and the preferred acyl chain composition is 1-stearoyl-2-arachidonoyl-sn-phosphatidic acid. Plays an important role in regulating the growth and maturation of lipid droplets which are storage organelles at the center of lipid and energy homeostasis. This chain is Phosphatidate cytidylyltransferase 2, found in Homo sapiens (Human).